Here is a 136-residue protein sequence, read N- to C-terminus: ATP synthase F(0) complex subunit C1, mitochondrial (136 aa).

The N-terminal 61 residues, 1–61 (MQTTGALLIS…REFQTSVVSR (61 aa)), are a transit peptide targeting the mitochondrion. Residues 77-97 (VGVAGSGAGIGTVFGSLIIGY) form a helical membrane-spanning segment. Lysine 104 carries the post-translational modification N6,N6,N6-trimethyllysine. A helical transmembrane segment spans residues 112 to 132 (ILGFALSEAMGLFCLMVAFLI).

Belongs to the ATPase C chain family. As to quaternary structure, homooctamer; the c-ring consists of eight c subunits forming a circle, and each subunit adopts a hairpin shape. Component of the ATP synthase complex composed at least of ATP5F1A/subunit alpha, ATP5F1B/subunit beta, ATP5MC1/subunit c (homooctomer), MT-ATP6/subunit a, MT-ATP8/subunit 8, ATP5ME/subunit e, ATP5MF/subunit f, ATP5MG/subunit g, ATP5MK/subunit k, ATP5MJ/subunit j, ATP5F1C/subunit gamma, ATP5F1D/subunit delta, ATP5F1E/subunit epsilon, ATP5PF/subunit F6, ATP5PB/subunit b, ATP5PD/subunit d, ATP5PO/subunit OSCP. ATP synthase complex consists of a soluble F(1) head domain (subunits alpha(3) and beta(3)) - the catalytic core - and a membrane F(0) domain - the membrane proton channel (subunits c, a, 8, e, f, g, k and j). These two domains are linked by a central stalk (subunits gamma, delta, and epsilon) rotating inside the F1 region and a stationary peripheral stalk (subunits F6, b, d, and OSCP). Interacts with TMEM70 (homooligomer form); this interaction facilitates the oligomer formation of subunit c/ATP5MC1 (c-ring) and the c-ring membrane insertion and also protects ATP5MC1 against intramitochondrial proteolysis. In terms of processing, trimethylated by ATPSCKMT at Lys-104. Methylation is required for proper incorporation of the C subunit into the ATP synthase complex and mitochondrial respiration.

It is found in the mitochondrion membrane. It carries out the reaction H(+)(in) = H(+)(out). Its function is as follows. Subunit c, of the mitochondrial membrane ATP synthase complex (F(1)F(0) ATP synthase or Complex V) that produces ATP from ADP in the presence of a proton gradient across the membrane which is generated by electron transport complexes of the respiratory chain. ATP synthase complex consist of a soluble F(1) head domain - the catalytic core - and a membrane F(1) domain - the membrane proton channel. These two domains are linked by a central stalk rotating inside the F(1) region and a stationary peripheral stalk. During catalysis, ATP synthesis in the catalytic domain of F(1) is coupled via a rotary mechanism of the central stalk subunits to proton translocation. With the subunit a (MT-ATP6), forms the proton-conducting channel in the F(0) domain, that contains two crucial half-channels (inlet and outlet) that facilitate proton movement from the mitochondrial intermembrane space (IMS) into the matrix. Protons are taken up via the inlet half-channel and released through the outlet half-channel, following a Grotthuss mechanism. The protein is ATP synthase F(0) complex subunit C1, mitochondrial of Bos taurus (Bovine).